The following is a 215-amino-acid chain: Ankyrin repeat domain-containing protein 49 (215 aa).

2 ANK repeats span residues 81-110 (DGYT…NPNA) and 114-143 (LGWT…DVNA).

As to quaternary structure, interacts with Bdbt; interaction promotes the stability of both complex members.

The protein localises to the cytoplasm. The protein resides in the cytosol. It is found in the cell membrane. Functionally, required for regulating the establishment of planar cell polarity in the wing. Forms a complex with Bdbt which likely functions in the regulation of planar polarity by promoting the activity of Dco during planar polarity establishment. Within the complex, probably functions to stabilize Bdbt, while Bdbt directly promotes Dco activity in regulating phosphorylation of core proteins such as dsh, and asymmetric localization. The chain is Ankyrin repeat domain-containing protein 49 from Drosophila melanogaster (Fruit fly).